Consider the following 704-residue polypeptide: Glycogen [starch] synthase, liver (704 aa).

Ser-8 carries the phosphoserine; by AMPK and PKA modification. At Ser-11 the chain carries Phosphoserine. A UDP-binding site is contributed by Lys-40. Residues His-205 and Arg-211 each contribute to the UDP-alpha-D-glucose site. Positions 291, 292, 294, 297, and 301 each coordinate alpha-D-glucose 6-phosphate. Arg-331 provides a ligand contact to UDP. Arg-331 is a UDP-alpha-D-glucose binding site. Residue His-501 participates in alpha-D-glucose 6-phosphate binding. Glu-510, Trp-512, and Gly-513 together coordinate UDP-alpha-D-glucose. A UDP-binding site is contributed by Thr-515. Arg-582 and Arg-586 together coordinate alpha-D-glucose 6-phosphate. The segment at 620 to 704 is disordered; it reads KFHLEPTSPP…KKKLHGEYKN (85 aa). Position 627 is a phosphoserine (Ser-627). Phosphoserine; by GSK3-alpha and GSK3-beta is present on residues Ser-641, Ser-645, Ser-649, and Ser-653. Low complexity predominate over residues 647-657; sequence SGSQASSPQCS. Residue Ser-657 is modified to Phosphoserine; by CK2. Residues 658-675 are compositionally biased toward acidic residues; the sequence is DAEDEEDEDERYDEEEEA. At Ser-684 the chain carries Phosphoserine.

It belongs to the glycosyltransferase 3 family. Part of the glycogen synthase (GS)-glycogenin complex, a heterooctamer composed of a tetramer of GS and 2 dimers of glycogenin, where each GS protomer binds to one glycogenin subunit (via glycogenin C-terminus); the GS tetramer may dissociate from glycogenin dimers to continue glycogen polymerization on its own. May also form a heterooctamer complex with GYG1 (via GYG1 C-terminus). Post-translationally, phosphorylation reduces the activity towards UDP-alpha-D-glucose. Primed phosphorylation at Ser-657 (site 5) by CSNK2A1 and CSNK2A2 is required for inhibitory phosphorylation at Ser-641 (site 3a), Ser-645 (site 3b), Ser-649 (site 3c) and Ser-653 (site 4) by GSK3A an GSK3B. Dephosphorylation at Ser-641 and Ser-645 by PP1 activates the enzyme. Phosphorylation at Ser-8 is not required for interaction with GYG1. Interaction with GYG1 does not regulate the phosphorylation at Ser-8 and Ser-641. In terms of tissue distribution, specifically expressed in liver.

The catalysed reaction is [(1-&gt;4)-alpha-D-glucosyl](n) + UDP-alpha-D-glucose = [(1-&gt;4)-alpha-D-glucosyl](n+1) + UDP + H(+). Its pathway is glycan biosynthesis; glycogen biosynthesis. With respect to regulation, allosteric activation by glucose-6-phosphate. Phosphorylation reduces the activity towards UDP-glucose. When in the non-phosphorylated state, glycogen synthase does not require glucose-6-phosphate as an allosteric activator; when phosphorylated it does. Glycogen synthase participates in the glycogen biosynthetic process along with glycogenin and glycogen branching enzyme. Extends the primer composed of a few glucose units formed by glycogenin by adding new glucose units to it. In this context, glycogen synthase transfers the glycosyl residue from UDP-Glc to the non-reducing end of alpha-1,4-glucan. This is Glycogen [starch] synthase, liver from Mus musculus (Mouse).